The chain runs to 315 residues: tRNA-cytidine(32) 2-sulfurtransferase (315 aa).

A PP-loop motif motif is present at residues 54–59 (SGGKDS). 3 residues coordinate [4Fe-4S] cluster: C129, C132, and C220.

It belongs to the TtcA family. Homodimer. Requires Mg(2+) as cofactor. [4Fe-4S] cluster is required as a cofactor.

Its subcellular location is the cytoplasm. The enzyme catalyses cytidine(32) in tRNA + S-sulfanyl-L-cysteinyl-[cysteine desulfurase] + AH2 + ATP = 2-thiocytidine(32) in tRNA + L-cysteinyl-[cysteine desulfurase] + A + AMP + diphosphate + H(+). It participates in tRNA modification. In terms of biological role, catalyzes the ATP-dependent 2-thiolation of cytidine in position 32 of tRNA, to form 2-thiocytidine (s(2)C32). The sulfur atoms are provided by the cysteine/cysteine desulfurase (IscS) system. This Bordetella avium (strain 197N) protein is tRNA-cytidine(32) 2-sulfurtransferase.